The following is an 86-amino-acid chain: MSEVASRELRNDTAGVLRRVRAGEDVTITVSGRPVAVLTPVRPRRRRWLSKTEFLSRLRGAQADPGLRNDLAVLAGDTTEDLGPIR.

Belongs to the phD/YefM antitoxin family. Forms a complex with VapC5.

Probable antitoxin component of a probable type II toxin-antitoxin (TA) system. The cognate toxin is VapC5. The polypeptide is Putative antitoxin VapB5 (vapB5) (Mycobacterium tuberculosis (strain CDC 1551 / Oshkosh)).